Reading from the N-terminus, the 500-residue chain is Probable cytosol aminopeptidase (500 aa).

Mn(2+) contacts are provided by Lys-269 and Asp-274. The active site involves Lys-281. Mn(2+) is bound by residues Asp-292, Asp-351, and Glu-353. Residue Arg-355 is part of the active site.

Belongs to the peptidase M17 family. Mn(2+) is required as a cofactor.

Its subcellular location is the cytoplasm. It catalyses the reaction Release of an N-terminal amino acid, Xaa-|-Yaa-, in which Xaa is preferably Leu, but may be other amino acids including Pro although not Arg or Lys, and Yaa may be Pro. Amino acid amides and methyl esters are also readily hydrolyzed, but rates on arylamides are exceedingly low.. It carries out the reaction Release of an N-terminal amino acid, preferentially leucine, but not glutamic or aspartic acids.. Its function is as follows. Presumably involved in the processing and regular turnover of intracellular proteins. Catalyzes the removal of unsubstituted N-terminal amino acids from various peptides. The protein is Probable cytosol aminopeptidase of Acidithiobacillus ferrooxidans (strain ATCC 23270 / DSM 14882 / CIP 104768 / NCIMB 8455) (Ferrobacillus ferrooxidans (strain ATCC 23270)).